The chain runs to 511 residues: Bifunctional purine biosynthesis protein PurH (511 aa).

In terms of domain architecture, MGS-like spans 1–145 (MKKRALVSVS…KNHKFVSVIV (145 aa)).

This sequence belongs to the PurH family.

The catalysed reaction is (6R)-10-formyltetrahydrofolate + 5-amino-1-(5-phospho-beta-D-ribosyl)imidazole-4-carboxamide = 5-formamido-1-(5-phospho-D-ribosyl)imidazole-4-carboxamide + (6S)-5,6,7,8-tetrahydrofolate. It catalyses the reaction IMP + H2O = 5-formamido-1-(5-phospho-D-ribosyl)imidazole-4-carboxamide. The protein operates within purine metabolism; IMP biosynthesis via de novo pathway; 5-formamido-1-(5-phospho-D-ribosyl)imidazole-4-carboxamide from 5-amino-1-(5-phospho-D-ribosyl)imidazole-4-carboxamide (10-formyl THF route): step 1/1. It functions in the pathway purine metabolism; IMP biosynthesis via de novo pathway; IMP from 5-formamido-1-(5-phospho-D-ribosyl)imidazole-4-carboxamide: step 1/1. The sequence is that of Bifunctional purine biosynthesis protein PurH from Bacillus mycoides (strain KBAB4) (Bacillus weihenstephanensis).